Here is a 102-residue protein sequence, read N- to C-terminus: Large ribosomal subunit protein uL24 (102 aa).

Belongs to the universal ribosomal protein uL24 family. In terms of assembly, part of the 50S ribosomal subunit.

One of two assembly initiator proteins, it binds directly to the 5'-end of the 23S rRNA, where it nucleates assembly of the 50S subunit. Functionally, one of the proteins that surrounds the polypeptide exit tunnel on the outside of the subunit. This Rhizobium etli (strain CIAT 652) protein is Large ribosomal subunit protein uL24.